The primary structure comprises 72 residues: Penaeidin-2b (72 aa).

The first 21 residues, 1 to 21, serve as a signal peptide directing secretion; it reads MRLVVCLVFLASFALVCQGEA. Intrachain disulfides connect C45/C59, C48/C66, and C60/C67. A Lysine amide modification is found at K71.

Belongs to the penaeidin family.

The protein localises to the cytoplasmic granule. Its function is as follows. Antibacterial and antifungal activity. Presents chitin-binding activity. The chain is Penaeidin-2b from Penaeus vannamei (Whiteleg shrimp).